A 468-amino-acid chain; its full sequence is Cyclin-dependent kinase 14 (468 aa).

Phosphoserine occurs at positions 24, 77, and 94. Residues 102–131 (FKSSSAGKESPKVRRHSSPSSPTSPKFGKA) form a disordered region. Position 133 is a phosphoserine (serine 133). In terms of domain architecture, Protein kinase spans 134 to 418 (YEKLEKLGEG…AQAALSHEYF (285 aa)). Residues 140 to 148 (LGEGSYATV) and lysine 163 contribute to the ATP site. The active-site Proton acceptor is the aspartate 255. Residues 448–468 (ESMRAFGKNSSYGKSLSNSKH) form a disordered region. Residues 455 to 468 (KNSSYGKSLSNSKH) show a composition bias toward polar residues.

It belongs to the protein kinase superfamily. CMGC Ser/Thr protein kinase family. CDC2/CDKX subfamily. Found in a complex with LRP6, CCNY and CAPRIN2 during G2/M stage; CAPRIN2 functions as a scaffold for the complex by binding to CCNY via its N terminus and to CDK14 via its C terminus. Interacts with CCNY; CCNY mediates its recruitment to the plasma membrane and promotes phosphorylation of LRP6. Interacts with CCDN3 and CDKN1A. Interacts with SEPT8. Interacts with 14-3-3 proteina YWHAB, YWHAE, YWHAH and YWHAQ.

Its subcellular location is the cell membrane. It is found in the cytoplasm. It localises to the nucleus. The enzyme catalyses L-seryl-[protein] + ATP = O-phospho-L-seryl-[protein] + ADP + H(+). It carries out the reaction L-threonyl-[protein] + ATP = O-phospho-L-threonyl-[protein] + ADP + H(+). With respect to regulation, serine/threonine-protein kinase activity is promoted by associated cyclins CCDN3 and CCNY and repressed by CDKN1A. Functionally, serine/threonine-protein kinase involved in the control of the eukaryotic cell cycle, whose activity is controlled by an associated cyclin. Acts as a cell-cycle regulator of Wnt signaling pathway during G2/M phase by mediating the phosphorylation of LRP6 at 'Ser-1490', leading to the activation of the Wnt signaling pathway. Acts as a regulator of cell cycle progression and cell proliferation via its interaction with CCDN3. Phosphorylates RB1 in vitro, however the relevance of such result remains to be confirmed in vivo. May also play a role in meiosis, neuron differentiation and may indirectly act as a negative regulator of insulin-responsive glucose transport. The chain is Cyclin-dependent kinase 14 (CDK14) from Oryctolagus cuniculus (Rabbit).